Consider the following 288-residue polypeptide: Homoserine kinase (288 aa).

79–89 is an ATP binding site; sequence PPARGLGSSSA.

The protein belongs to the GHMP kinase family. Homoserine kinase subfamily.

It is found in the cytoplasm. It carries out the reaction L-homoserine + ATP = O-phospho-L-homoserine + ADP + H(+). It functions in the pathway amino-acid biosynthesis; L-threonine biosynthesis; L-threonine from L-aspartate: step 4/5. In terms of biological role, catalyzes the ATP-dependent phosphorylation of L-homoserine to L-homoserine phosphate. In Listeria welshimeri serovar 6b (strain ATCC 35897 / DSM 20650 / CCUG 15529 / CIP 8149 / NCTC 11857 / SLCC 5334 / V8), this protein is Homoserine kinase.